We begin with the raw amino-acid sequence, 319 residues long: Adenosine receptor A3 (319 aa).

The Extracellular segment spans residues 1–15 (MEADNTTETDWLNIT). N-linked (GlcNAc...) asparagine glycosylation is found at N5 and N13. Residues 16 to 38 (YITMEAAIGLCAVVGNMLVIWVV) traverse the membrane as a helical segment. The Cytoplasmic portion of the chain corresponds to 39 to 49 (KLNPTLRTTTV). The helical transmembrane segment at 50–73 (YFIVSLALADIAVGVLVIPLAIAV) threads the bilayer. Residues 74 to 85 (SLQVKMHFYACL) are Extracellular-facing. C84 and C167 are disulfide-bonded. Residues 86–107 (FMSCVLLIFTHASIMSLLAIAV) traverse the membrane as a helical segment. The Cytoplasmic portion of the chain corresponds to 108-127 (HRYLRVKLTVRYRTVTTQRR). A helical transmembrane segment spans residues 128-149 (IWLFLGLCWLVSFLVGLTPMFG). Residues 150 to 178 (WNRKATLASSQNSSTLLCHFRSVVSLDYM) are Extracellular-facing. The N-linked (GlcNAc...) asparagine glycan is linked to N161. Residues 179 to 199 (VFFSFITWILVPLVVMCIIYL) form a helical membrane-spanning segment. At 200 to 232 (DIFYIIRNKLSQNLTGFRETRAFYGREFKTAKS) the chain is on the cytoplasmic side. Residues 233-256 (LFLVLFLFALCWLPLSIINFVSYF) traverse the membrane as a helical segment. At 257-262 (DVKIPD) the chain is on the extracellular side. The helical transmembrane segment at 263–285 (VAMCLGILLSHANSMMNPIVYAC) threads the bilayer. Topologically, residues 286 to 319 (KIKKFKETYFLILRAVRLCQTSDSLDSNMEQTTE) are cytoplasmic. The S-palmitoyl cysteine moiety is linked to residue C304.

The protein belongs to the G-protein coupled receptor 1 family. Post-translationally, phosphorylation on Thr-317 and Thr-318 may be crucial for rapid desensitization. Phosphorylation on Thr-317 may be necessary for phosphorylation on Thr-318 to occur.

The protein localises to the cell membrane. Its function is as follows. Receptor for adenosine. The activity of this receptor is mediated by G proteins which inhibits adenylyl cyclase. This Mus musculus (Mouse) protein is Adenosine receptor A3 (Adora3).